A 79-amino-acid polypeptide reads, in one-letter code: Short neurotoxin 6 (79 aa).

The first 21 residues, 1-21 (MKTLLLTLVMVTIMCLDLGYT), serve as a signal peptide directing secretion. Disulfide bonds link C24/C41, C34/C59, C63/C71, and C72/C77.

This sequence belongs to the three-finger toxin family. Short-chain subfamily. Type III alpha-neurotoxin sub-subfamily. As to expression, expressed by the venom gland.

Its subcellular location is the secreted. Functionally, binds with high affinity to muscle nicotinic acetylcholine receptor (nAChR) and hinders acetylcholine binding to the receptor, thereby impairing neuromuscular transmission. Competes with the binding of alpha-bungarotoxin on muscle AChR (from Torpedo) with an IC(50) of 0.18 uM. Causes muscle paralysis, spasms and increased respiration. The protein is Short neurotoxin 6 of Pseudonaja textilis (Eastern brown snake).